We begin with the raw amino-acid sequence, 216 residues long: Probable methylthioribulose-1-phosphate dehydratase (216 aa).

C87 is a substrate binding site. Residues H105 and H107 each contribute to the Zn(2+) site. The active-site Proton donor/acceptor is E129.

This sequence belongs to the aldolase class II family. MtnB subfamily. Zn(2+) serves as cofactor.

The protein localises to the cytoplasm. The catalysed reaction is 5-(methylsulfanyl)-D-ribulose 1-phosphate = 5-methylsulfanyl-2,3-dioxopentyl phosphate + H2O. The protein operates within amino-acid biosynthesis; L-methionine biosynthesis via salvage pathway; L-methionine from S-methyl-5-thio-alpha-D-ribose 1-phosphate: step 2/6. In terms of biological role, catalyzes the dehydration of methylthioribulose-1-phosphate (MTRu-1-P) into 2,3-diketo-5-methylthiopentyl-1-phosphate (DK-MTP-1-P). The chain is Probable methylthioribulose-1-phosphate dehydratase from Drosophila persimilis (Fruit fly).